Here is a 313-residue protein sequence, read N- to C-terminus: Olfactory receptor 1J2 (313 aa).

Residues Met-1–Ala-25 lie on the Extracellular side of the membrane. Asn-5 carries N-linked (GlcNAc...) asparagine glycosylation. The helical transmembrane segment at Val-26–Ile-49 threads the bilayer. At Gln-50–Thr-57 the chain is on the cytoplasmic side. The chain crosses the membrane as a helical span at residues Pro-58 to Pro-79. Residues Lys-80 to Gln-100 are Extracellular-facing. Cys-97 and Cys-189 are disulfide-bonded. Residues Met-101 to Tyr-120 form a helical membrane-spanning segment. The Cytoplasmic segment spans residues Asp-121–Glu-139. Residues Leu-140 to Ser-158 form a helical membrane-spanning segment. Topologically, residues His-159 to Glu-196 are extracellular. The helical transmembrane segment at Leu-197–Gly-219 threads the bilayer. At Tyr-220–Lys-236 the chain is on the cytoplasmic side. The chain crosses the membrane as a helical span at residues Ala-237–Tyr-259. At Leu-260–Val-272 the chain is on the extracellular side. A helical transmembrane segment spans residues Ile-273 to Leu-292. The Cytoplasmic segment spans residues Arg-293 to Trp-313.

It belongs to the G-protein coupled receptor 1 family.

It is found in the cell membrane. In terms of biological role, odorant receptor. The sequence is that of Olfactory receptor 1J2 (OR1J2) from Homo sapiens (Human).